The chain runs to 394 residues: Gastricsin (394 aa).

A signal peptide spans 1-16 (MKWMVVVLLCLPLLEA). The propeptide at 17 to 65 (TQIKVPLKKIKSIREVLREKGLLGDFLKNHKPQHARKFFRNRLAKTGDF) is activation peptide. In terms of domain architecture, Peptidase A1 spans 79–391 (YFGQISLGTP…DLANNRVGFA (313 aa)). Asp-97 is a catalytic residue. 2 disulfides stabilise this stretch: Cys-110–Cys-115 and Cys-273–Cys-277. Thr-283 is a catalytic residue. A disulfide bridge links Cys-316 with Cys-349.

This sequence belongs to the peptidase A1 family.

Its subcellular location is the secreted. It catalyses the reaction More restricted specificity than pepsin A, but shows preferential cleavage at Tyr-|-Xaa bonds. High activity on hemoglobin.. In terms of biological role, hydrolyzes a variety of proteins. The protein is Gastricsin (PGC) of Cavia porcellus (Guinea pig).